The primary structure comprises 188 residues: Ribosome hibernation promotion factor (188 aa).

The disordered stretch occupies residues 93 to 125 (KTRVNRKKRKESEHEPFPATPETPPETAVDHDK).

This sequence belongs to the HPF/YfiA ribosome-associated protein family. Long HPF subfamily. In terms of assembly, interacts with 100S ribosomes.

The protein resides in the cytoplasm. Functionally, required for dimerization of active 70S ribosomes into 100S ribosomes in stationary phase; 100S ribosomes are translationally inactive and sometimes present during exponential growth. This is Ribosome hibernation promotion factor from Staphylococcus carnosus (strain TM300).